The sequence spans 150 residues: Regulatory protein RecX (150 aa).

The protein belongs to the RecX family.

It localises to the cytoplasm. Its function is as follows. Modulates RecA activity. In Acidithiobacillus ferrooxidans (strain ATCC 23270 / DSM 14882 / CIP 104768 / NCIMB 8455) (Ferrobacillus ferrooxidans (strain ATCC 23270)), this protein is Regulatory protein RecX.